The primary structure comprises 201 residues: Potassium-transporting ATPase KdpC subunit (201 aa).

Residues Leu-12–Leu-34 form a helical membrane-spanning segment. A disordered region spans residues Arg-69–Thr-102. Residues Ser-81–Pro-101 show a composition bias toward polar residues.

Belongs to the KdpC family. In terms of assembly, the system is composed of three essential subunits: KdpA, KdpB and KdpC.

Its subcellular location is the cell inner membrane. Its function is as follows. Part of the high-affinity ATP-driven potassium transport (or Kdp) system, which catalyzes the hydrolysis of ATP coupled with the electrogenic transport of potassium into the cytoplasm. This subunit acts as a catalytic chaperone that increases the ATP-binding affinity of the ATP-hydrolyzing subunit KdpB by the formation of a transient KdpB/KdpC/ATP ternary complex. This Rhodopseudomonas palustris (strain TIE-1) protein is Potassium-transporting ATPase KdpC subunit.